A 257-amino-acid chain; its full sequence is Beta-fibrinogenase (257 aa).

The first 18 residues, 1–18 (MVLIRVLANLLLLQLSHA), serve as a signal peptide directing secretion. Positions 19 to 24 (QKSSEL) are excised as a propeptide. In terms of domain architecture, Peptidase S1 spans 25-248 (VVGGDECNIN…YTDWIQSIIA (224 aa)). Disulfide bonds link Cys-31-Cys-162, Cys-49-Cys-65, Cys-97-Cys-255, Cys-141-Cys-209, Cys-173-Cys-188, and Cys-199-Cys-224. Asn-44 is a glycosylation site (N-linked (GlcNAc...) asparagine). The Charge relay system role is filled by His-64. Asn-78 and Asn-102 each carry an N-linked (GlcNAc...) asparagine glycan. Asp-109 functions as the Charge relay system in the catalytic mechanism. 2 N-linked (GlcNAc...) asparagine glycosylation sites follow: Asn-153 and Asn-169. The Charge relay system role is filled by Ser-203. An N-linked (GlcNAc...) asparagine glycan is attached at Asn-250.

In terms of assembly, monomer. Glycosylated. Contains 23.0% of hexoses, 8.3% of hexosamines and 1.0% of sialic acids. As to expression, expressed by the venom gland.

The protein localises to the secreted. With respect to regulation, inhibited by diisopropylfluorophosphate (DFP) and PMSF. In terms of biological role, snake venom serine protease that has fibrinogenolytic activities by hydrolyzing the beta chain of fibrinogen (FGB). Typical arginine esterase which hydrolyzes esters and amides of arginine. The chain is Beta-fibrinogenase from Macrovipera lebetinus (Levantine viper).